The chain runs to 93 residues: MTRSIKKGPFVADHLLKKIEKFNAQGQKKVLTTWSRSSTILPVMIGHTISTYNGREFIPVFVTDQMVGHKLGEFAPTRTFKGHVKSDKKAKRR.

It belongs to the universal ribosomal protein uS19 family.

It localises to the plastid. Its subcellular location is the chloroplast. Its function is as follows. Protein S19 forms a complex with S13 that binds strongly to the 16S ribosomal RNA. This chain is Small ribosomal subunit protein uS19c, found in Tetradesmus obliquus (Green alga).